Consider the following 206-residue polypeptide: NADH-quinone oxidoreductase subunit C (206 aa).

It belongs to the complex I 30 kDa subunit family. In terms of assembly, NDH-1 is composed of 14 different subunits. Subunits NuoB, C, D, E, F, and G constitute the peripheral sector of the complex.

It is found in the cell inner membrane. The enzyme catalyses a quinone + NADH + 5 H(+)(in) = a quinol + NAD(+) + 4 H(+)(out). Functionally, NDH-1 shuttles electrons from NADH, via FMN and iron-sulfur (Fe-S) centers, to quinones in the respiratory chain. The immediate electron acceptor for the enzyme in this species is believed to be ubiquinone. Couples the redox reaction to proton translocation (for every two electrons transferred, four hydrogen ions are translocated across the cytoplasmic membrane), and thus conserves the redox energy in a proton gradient. The protein is NADH-quinone oxidoreductase subunit C of Bordetella avium (strain 197N).